The following is a 277-amino-acid chain: Phosphoenolpyruvate synthase regulatory protein (277 aa).

157 to 164 (GVSRCGKT) is a binding site for ADP.

It belongs to the pyruvate, phosphate/water dikinase regulatory protein family. PSRP subfamily.

The enzyme catalyses [pyruvate, water dikinase] + ADP = [pyruvate, water dikinase]-phosphate + AMP + H(+). The catalysed reaction is [pyruvate, water dikinase]-phosphate + phosphate + H(+) = [pyruvate, water dikinase] + diphosphate. Functionally, bifunctional serine/threonine kinase and phosphorylase involved in the regulation of the phosphoenolpyruvate synthase (PEPS) by catalyzing its phosphorylation/dephosphorylation. In Salmonella agona (strain SL483), this protein is Phosphoenolpyruvate synthase regulatory protein.